The chain runs to 390 residues: Phosphoglycerate kinase (390 aa).

Substrate-binding positions include D21–N23, R36, H59–R62, R114, and R147. Residues K198, E314, and G340–T343 each bind ATP.

The protein belongs to the phosphoglycerate kinase family. As to quaternary structure, monomer.

Its subcellular location is the cytoplasm. The enzyme catalyses (2R)-3-phosphoglycerate + ATP = (2R)-3-phospho-glyceroyl phosphate + ADP. The protein operates within carbohydrate degradation; glycolysis; pyruvate from D-glyceraldehyde 3-phosphate: step 2/5. This chain is Phosphoglycerate kinase, found in Buchnera aphidicola subsp. Acyrthosiphon pisum (strain 5A).